A 257-amino-acid polypeptide reads, in one-letter code: NAD-capped RNA hydrolase NudC (257 aa).

Arg-69 provides a ligand contact to substrate. Residues Cys-98 and Cys-101 each coordinate Zn(2+). Residue Glu-111 participates in substrate binding. Cys-116 and Cys-119 together coordinate Zn(2+). Tyr-124 provides a ligand contact to substrate. In terms of domain architecture, Nudix hydrolase spans 125–248 (PQIAPCIIVA…TVARRLIEDT (124 aa)). The a divalent metal cation site is built by Ala-158, Glu-174, and Glu-178. The Nudix box motif lies at 159–180 (GFVEVGETLEQAVAREVMEESG). Residue 192-199 (QPWPFPQS) coordinates substrate. Glu-219 is a binding site for a divalent metal cation. Ala-241 contacts substrate.

It belongs to the Nudix hydrolase family. NudC subfamily. Homodimer. It depends on Mg(2+) as a cofactor. Requires Mn(2+) as cofactor. The cofactor is Zn(2+).

It carries out the reaction a 5'-end NAD(+)-phospho-ribonucleoside in mRNA + H2O = a 5'-end phospho-adenosine-phospho-ribonucleoside in mRNA + beta-nicotinamide D-ribonucleotide + 2 H(+). It catalyses the reaction NAD(+) + H2O = beta-nicotinamide D-ribonucleotide + AMP + 2 H(+). The enzyme catalyses NADH + H2O = reduced beta-nicotinamide D-ribonucleotide + AMP + 2 H(+). In terms of biological role, mRNA decapping enzyme that specifically removes the nicotinamide adenine dinucleotide (NAD) cap from a subset of mRNAs by hydrolyzing the diphosphate linkage to produce nicotinamide mononucleotide (NMN) and 5' monophosphate mRNA. The NAD-cap is present at the 5'-end of some mRNAs and stabilizes RNA against 5'-processing. Has preference for mRNAs with a 5'-end purine. Catalyzes the hydrolysis of a broad range of dinucleotide pyrophosphates. The sequence is that of NAD-capped RNA hydrolase NudC from Klebsiella pneumoniae (strain 342).